We begin with the raw amino-acid sequence, 81 residues long: Acyl carrier protein (81 aa).

The Carrier domain occupies 2 to 80 (ASKEEILAGL…DAVDFIDGAQ (79 aa)). At Ser-40 the chain carries O-(pantetheine 4'-phosphoryl)serine.

The protein belongs to the acyl carrier protein (ACP) family. In terms of processing, 4'-phosphopantetheine is transferred from CoA to a specific serine of apo-ACP by AcpS. This modification is essential for activity because fatty acids are bound in thioester linkage to the sulfhydryl of the prosthetic group.

It is found in the cytoplasm. It functions in the pathway lipid metabolism; fatty acid biosynthesis. Carrier of the growing fatty acid chain in fatty acid biosynthesis. The sequence is that of Acyl carrier protein from Micrococcus luteus (strain ATCC 4698 / DSM 20030 / JCM 1464 / CCM 169 / CCUG 5858 / IAM 1056 / NBRC 3333 / NCIMB 9278 / NCTC 2665 / VKM Ac-2230) (Micrococcus lysodeikticus).